We begin with the raw amino-acid sequence, 296 residues long: Mycothiol acetyltransferase (296 aa).

N-acetyltransferase domains follow at residues Arg-8–Glu-146 and Ile-151–Val-296. Glu-39 serves as a coordination point for 1D-myo-inositol 2-(L-cysteinylamino)-2-deoxy-alpha-D-glucopyranoside. Val-76–Thr-78 lines the acetyl-CoA pocket. 1D-myo-inositol 2-(L-cysteinylamino)-2-deoxy-alpha-D-glucopyranoside contacts are provided by Glu-178, Lys-220, and Glu-228. Acetyl-CoA is bound by residues Val-232–Val-234 and Gln-239–Arg-245. Tyr-266 contributes to the 1D-myo-inositol 2-(L-cysteinylamino)-2-deoxy-alpha-D-glucopyranoside binding site.

Belongs to the acetyltransferase family. MshD subfamily. As to quaternary structure, monomer.

The catalysed reaction is 1D-myo-inositol 2-(L-cysteinylamino)-2-deoxy-alpha-D-glucopyranoside + acetyl-CoA = mycothiol + CoA + H(+). Catalyzes the transfer of acetyl from acetyl-CoA to desacetylmycothiol (Cys-GlcN-Ins) to form mycothiol. The polypeptide is Mycothiol acetyltransferase (Kytococcus sedentarius (strain ATCC 14392 / DSM 20547 / JCM 11482 / CCUG 33030 / NBRC 15357 / NCTC 11040 / CCM 314 / 541) (Micrococcus sedentarius)).